The sequence spans 622 residues: Cilia- and flagella-associated protein 206 (622 aa).

The protein belongs to the CFAP206 family.

Its subcellular location is the cytoplasm. The protein resides in the cytoskeleton. It is found in the cilium axoneme. The protein localises to the cilium basal body. Its function is as follows. Essential for sperm motility and is involved in the regulation of the beating frequency of motile cilia on the epithelial cells of the respiratory tract. Required for the establishment of radial spokes in sperm flagella. The chain is Cilia- and flagella-associated protein 206 from Bos taurus (Bovine).